A 615-amino-acid polypeptide reads, in one-letter code: MVNFSVLPPEINSGRMFFGAGSGPMLAAAAAWDGLAAELGLAAESFGLVTSGLAGGSGQAWQGAAAAAMVVAAAPYAGWLAAAAARAGGAAVQAKAVAGAFEAARAAMVDPVVVAANRSAFVQLVLSNVFGQNAPAIAAAEATYEQMWAADVAAMVGYHGGASAAAAALAPWQQAVPGLSGLLGGAANAPAAAAQGAAQGLAELTLNLGVGNIGSLNLGSGNIGGTNVGSGNVGGTNLGSGNYGSLNWGSGNTGTGNAGSGNTGDYNPGSGNFGSGNFGSGNIGSLNVGSGNFGTLNLANGNNGDVNFGGGNTGDFNFGGGNNGTLNFGFGNTGSGNFGFGNTGNNNIGIGLTGDGQIGIGGLNSGTGNIGFGNSGNNNIGFFNSGDGNIGFFNSGDGNTGFGNAGNINTGFWNAGNLNTGFGSAGNGNVGIFDGGNSNSGSFNVGFQNTGFGNSGAGNTGFFNAGDSNTGFANAGNVNTGFFNGGDINTGGFNGGNVNTGFGSALTQAGANSGFGNLGTGNSGWGNSDPSGTGNSGFFNTGNGNSGFSNAGPAMLPGFNSGFANIGSFNAGIANSGNNLAGISNSGDDSSGAVNSGSQNSGAFNAGVGLSGFFR.

This sequence belongs to the mycobacterial PPE family.

This is an uncharacterized protein from Mycobacterium tuberculosis (strain CDC 1551 / Oshkosh).